An 88-amino-acid polypeptide reads, in one-letter code: Small ribosomal subunit protein bS20 (88 aa).

The protein belongs to the bacterial ribosomal protein bS20 family.

Its function is as follows. Binds directly to 16S ribosomal RNA. The polypeptide is Small ribosomal subunit protein bS20 (Clostridium acetobutylicum (strain ATCC 824 / DSM 792 / JCM 1419 / IAM 19013 / LMG 5710 / NBRC 13948 / NRRL B-527 / VKM B-1787 / 2291 / W)).